The primary structure comprises 411 residues: Protein translocase subunit SecY (411 aa).

A run of 10 helical transmembrane segments spans residues 11–31 (IIFTLFLLVLARLGIFIPVPG), 52–72 (IFSGGGFSTIGIFALGIVPYI), 111–131 (ALGWATLQSGAISIWVKPYVF), 135–155 (FAFVCESVLALTAGSMIIMWL), 163–180 (GIGNGASLLIFQNIVSGL), 197–217 (SLKFGLFIAIFLLMIIITICV), 253–273 (VMPIVFASASMALPSYLTQII), 291–311 (LYLLLYCALILFFSYFYTSIV), 349–369 (TFLGASFLFTVALIPFIIEKV), and 377–397 (GLGATSLLILVGVAIDTAKQI).

This sequence belongs to the SecY/SEC61-alpha family. As to quaternary structure, component of the plastid Sec protein translocase complex, which is composed of at least SecY, SecE and SecG.

The protein resides in the plastid. The protein localises to the chloroplast thylakoid membrane. Its function is as follows. The central subunit of the protein translocation channel SecYE. Consists of two halves formed by TMs 1-5 and 6-10. These two domains form a lateral gate at the front which open onto the bilayer between TMs 2 and 7, and are clamped together by SecE at the back. The channel is closed by both a pore ring composed of hydrophobic SecY resides and a short helix (helix 2A) on the extracellular side of the membrane which forms a plug. This chain is Protein translocase subunit SecY, found in Pyropia yezoensis (Susabi-nori).